A 509-amino-acid chain; its full sequence is uncharacterized protein (509 aa).

The protein localises to the virion. This is an uncharacterized protein from Acanthamoeba polyphaga mimivirus (APMV).